The sequence spans 258 residues: Trans-aconitate 2-methyltransferase (258 aa).

It belongs to the methyltransferase superfamily. Tam family.

The protein resides in the cytoplasm. The enzyme catalyses trans-aconitate + S-adenosyl-L-methionine = (E)-3-(methoxycarbonyl)pent-2-enedioate + S-adenosyl-L-homocysteine. Its function is as follows. Catalyzes the S-adenosylmethionine monomethyl esterification of trans-aconitate. The sequence is that of Trans-aconitate 2-methyltransferase from Acidovorax ebreus (strain TPSY) (Diaphorobacter sp. (strain TPSY)).